Reading from the N-terminus, the 77-residue chain is Anionic peptide 17.1 (77 aa).

Positions Met1 to Ala24 are cleaved as a signal peptide.

It belongs to the non-disulfide-bridged peptide (NDBP) superfamily. Long chain multifunctional peptide (group 2) family. In terms of tissue distribution, expressed by the venom gland.

The protein resides in the secreted. In Lychas mucronatus (Chinese swimming scorpion), this protein is Anionic peptide 17.1.